The chain runs to 254 residues: MSFEEGADLNASHCCREWLAAVLGNTHVRWGWFVEETLVKVERFPAHQPLSWPQQTELWLAPVGSAPLPPASPWVHQLELSQVPLRDPYPGLGLDRALALWAAGIHYGWPCLVIDAGTALTLTGADSEGSLVGGAILPGLGLQAQALADHTALLPKVQWDPQDPLPPRWANDTVAAIRSGILHTLLAGLREFIADWRRRFPQGPLLLTGGDGKWLHPHLGPLDPELRWDPHLVLRGIAGCRQLHRTARHSPSAE.

Residue 22–29 (VLGNTHVR) participates in ATP binding. Substrate contacts are provided by residues Tyr-89 and 93–96 (GLDR). Asp-95 serves as the catalytic Proton acceptor. Asp-115 contacts K(+). Thr-118 contributes to the ATP binding site. Thr-173 serves as a coordination point for substrate.

Belongs to the type III pantothenate kinase family. In terms of assembly, homodimer. Requires NH4(+) as cofactor. It depends on K(+) as a cofactor.

It is found in the cytoplasm. The enzyme catalyses (R)-pantothenate + ATP = (R)-4'-phosphopantothenate + ADP + H(+). It functions in the pathway cofactor biosynthesis; coenzyme A biosynthesis; CoA from (R)-pantothenate: step 1/5. Functionally, catalyzes the phosphorylation of pantothenate (Pan), the first step in CoA biosynthesis. This chain is Type III pantothenate kinase, found in Synechococcus sp. (strain JA-2-3B'a(2-13)) (Cyanobacteria bacterium Yellowstone B-Prime).